A 314-amino-acid chain; its full sequence is Olfactory receptor 52K1 (314 aa).

The Extracellular portion of the chain corresponds to 1-27; that stretch reads MLPSNITSTHPAVFLLVGIPGLEHLHA. Residue asparagine 5 is glycosylated (N-linked (GlcNAc...) asparagine). Residues 28 to 48 form a helical membrane-spanning segment; it reads WISIPFCFAYTLALLGNCTLL. Residues 49-56 are Cytoplasmic-facing; sequence FIIQADAA. The helical transmembrane segment at 57 to 77 threads the bilayer; it reads LHEPMYLFLAMLATIDLVLSS. At 78 to 101 the chain is on the extracellular side; it reads TTLPKMLAIFWFRDQEINFFACLV. Cysteines 99 and 191 form a disulfide. Residues 102-122 form a helical membrane-spanning segment; that stretch reads QMFFLHSFSIMESAVLLAMAF. The Cytoplasmic portion of the chain corresponds to 123–141; the sequence is DRYVAICKPLHYTTVLTGS. The chain crosses the membrane as a helical span at residues 142–162; that stretch reads LITKIGMAAVARAVTLMTPLP. The Extracellular portion of the chain corresponds to 163 to 198; that stretch reads FLLRRFHYCRGPVIAHCYCEHMAVVRLACGDTSFNN. Residues 199 to 219 form a helical membrane-spanning segment; that stretch reads IYGIAVAMFIVVLDLLFVILS. Residues 220–239 lie on the Cytoplasmic side of the membrane; sequence YVFILQAVLQLASQEARYKA. The helical transmembrane segment at 240 to 260 threads the bilayer; the sequence is FGTCVSHIGAILSTYTPVVIS. Over 261–275 the chain is Extracellular; sequence SVMHRVARHAAPRVH. A helical transmembrane segment spans residues 276 to 296; sequence ILLAIFYLLFPPMVNPIIYGV. Topologically, residues 297–314 are cytoplasmic; that stretch reads KTKQIREYVLSLFQRKNM.

It belongs to the G-protein coupled receptor 1 family.

It is found in the cell membrane. Its function is as follows. Odorant receptor. The chain is Olfactory receptor 52K1 (OR52K1) from Homo sapiens (Human).